Here is a 27-residue protein sequence, read N- to C-terminus: Conotoxin Bt9.2 (27 aa).

3 disulfide bridges follow: Cys-2-Cys-16, Cys-6-Cys-19, and Cys-12-Cys-24. Pro-13 is subject to 4-hydroxyproline.

In terms of tissue distribution, expressed by the venom duct.

The protein localises to the secreted. Probable neurotoxin that inhibits ion channels. In Conus betulinus (Beech cone), this protein is Conotoxin Bt9.2.